Reading from the N-terminus, the 1189-residue chain is Increased DNA methylation 1 (1189 aa).

2 disordered regions span residues 475 to 498 and 523 to 597; these read KNLH…HDSL and SRDE…CRLL. The span at 523-532 shows a compositional bias: basic and acidic residues; it reads SRDERLRNEK. Basic residues-rich tracts occupy residues 541–550 and 565–590; these read KKGRKKARKH and NKGK…KRNN. The segment at 726-771 adopts a PHD-type 1 zinc-finger fold; the sequence is DDSCGVCGDGGELICCDNCPSTFHQACLSMQVLPEGSWYCSSCTCW. The segment at 767 to 823 adopts a PHD-type 2; degenerate zinc-finger fold; the sequence is SCTCWICSELVSDNAERSQDFKCSQCAHKYHGTCLQGISKRRKLFPETYFCGKNCEK. Positions 879–1024 constitute an N-acetyltransferase domain; it reads MEESFLSMVD…GTTLLKKTLY (146 aa). The segment at 1031 to 1157 is disordered; it reads TMKGVCLSKE…SSSSAALEEV (127 aa). 3 stretches are compositionally biased toward basic and acidic residues: residues 1038–1050, 1102–1114, and 1129–1145; these read SKER…KEAD, NPSR…DRPN, and CLQK…KETT. The segment covering 1147–1157 has biased composition (low complexity); the sequence is ASSSSAALEEV.

In terms of assembly, interacts (via N-terminus) with IDM2. Interacts with IMD3. Part of a complex made of MBD7, IDM1, IDM2 and IDM3. In terms of tissue distribution, expressed in cotyledons and hypocotyls in young seedlings.

The protein resides in the nucleus. Functionally, histone H3 acetyltransferase that binds methylated DNA at chromatin sites lacking histone H3K4 di- or trimethylation and catalyzes H3K18 and H3K23 acetylation. Prevents the transcriptional silencing of transgenes and of some endogenous genes. Requires the presence of IDM2 for efficient H3K18 acetylation, but not for H3K23 acetylation. The protein is Increased DNA methylation 1 of Arabidopsis thaliana (Mouse-ear cress).